The chain runs to 326 residues: Protein LEG1 homolog (326 aa).

Residues 1–22 (MKSNKTIFLILLFLINFNSIYS) form the signal peptide. N-linked (GlcNAc...) asparagine glycans are attached at residues N58, N85, N165, N226, and N245.

Belongs to the LEG1 family.

The protein resides in the secreted. This Dictyostelium discoideum (Social amoeba) protein is Protein LEG1 homolog.